The sequence spans 579 residues: 2-succinyl-5-enolpyruvyl-6-hydroxy-3-cyclohexene-1-carboxylate synthase (579 aa).

It belongs to the TPP enzyme family. MenD subfamily. In terms of assembly, homodimer. Mg(2+) is required as a cofactor. The cofactor is Mn(2+). It depends on thiamine diphosphate as a cofactor.

It carries out the reaction isochorismate + 2-oxoglutarate + H(+) = 5-enolpyruvoyl-6-hydroxy-2-succinyl-cyclohex-3-ene-1-carboxylate + CO2. It participates in quinol/quinone metabolism; 1,4-dihydroxy-2-naphthoate biosynthesis; 1,4-dihydroxy-2-naphthoate from chorismate: step 2/7. Its pathway is quinol/quinone metabolism; menaquinone biosynthesis. Catalyzes the thiamine diphosphate-dependent decarboxylation of 2-oxoglutarate and the subsequent addition of the resulting succinic semialdehyde-thiamine pyrophosphate anion to isochorismate to yield 2-succinyl-5-enolpyruvyl-6-hydroxy-3-cyclohexene-1-carboxylate (SEPHCHC). This Oceanobacillus iheyensis (strain DSM 14371 / CIP 107618 / JCM 11309 / KCTC 3954 / HTE831) protein is 2-succinyl-5-enolpyruvyl-6-hydroxy-3-cyclohexene-1-carboxylate synthase.